A 415-amino-acid chain; its full sequence is Serine/threonine transporter SstT (415 aa).

The next 8 helical transmembrane spans lie at 21–41 (ILLG…AALA), 45–65 (LGTL…LVLV), 85–105 (FLYL…SVLF), 142–162 (ALLN…GIAF), 193–213 (LGIF…ALWG), 217–237 (LLMV…PLIV), 289–309 (VAIP…ITVL), and 331–351 (VVAS…LLLI).

Belongs to the dicarboxylate/amino acid:cation symporter (DAACS) (TC 2.A.23) family.

Its subcellular location is the cell inner membrane. The catalysed reaction is L-serine(in) + Na(+)(in) = L-serine(out) + Na(+)(out). It catalyses the reaction L-threonine(in) + Na(+)(in) = L-threonine(out) + Na(+)(out). Its function is as follows. Involved in the import of serine and threonine into the cell, with the concomitant import of sodium (symport system). The chain is Serine/threonine transporter SstT from Pectobacterium atrosepticum (strain SCRI 1043 / ATCC BAA-672) (Erwinia carotovora subsp. atroseptica).